Reading from the N-terminus, the 387-residue chain is Ferrochelatase (387 aa).

A ferrochelatase region spans residues M1–V318. Residues H196 and E277 each coordinate Fe cation. The hlip domain stretch occupies residues M319–L387.

The protein in the N-terminal section; belongs to the ferrochelatase family. It in the C-terminal section; belongs to the Hlip family.

The protein localises to the cytoplasm. It catalyses the reaction heme b + 2 H(+) = protoporphyrin IX + Fe(2+). Its pathway is porphyrin-containing compound metabolism; protoheme biosynthesis; protoheme from protoporphyrin-IX: step 1/1. Functionally, catalyzes the ferrous insertion into protoporphyrin IX. In terms of biological role, the Hlip proteins might regulate tetrapyrrole biosynthesis, maybe at the level of aminolevulinic acid synthesis. Deletion of 4 to 5 members of the Hlip family (always including this member) suggests the proteins are involved in regulation of chlorophyll biosynthesis, in stabilization of chlorophyll-binding proteins and/or in reuse of chlorophylls, and may regulate tetrapyrrole biosynthesis. The Hlip proteins probably stabilize PSII assembly intermediates. In Synechocystis sp. (strain ATCC 27184 / PCC 6803 / Kazusa), this protein is Ferrochelatase.